We begin with the raw amino-acid sequence, 253 residues long: Hydroxyacylglutathione hydrolase (253 aa).

Residues H54, H56, D58, H59, H110, D127, and H165 each coordinate Zn(2+).

The protein belongs to the metallo-beta-lactamase superfamily. Glyoxalase II family. Monomer. It depends on Zn(2+) as a cofactor.

It catalyses the reaction an S-(2-hydroxyacyl)glutathione + H2O = a 2-hydroxy carboxylate + glutathione + H(+). The protein operates within secondary metabolite metabolism; methylglyoxal degradation; (R)-lactate from methylglyoxal: step 2/2. In terms of biological role, thiolesterase that catalyzes the hydrolysis of S-D-lactoyl-glutathione to form glutathione and D-lactic acid. The chain is Hydroxyacylglutathione hydrolase from Idiomarina loihiensis (strain ATCC BAA-735 / DSM 15497 / L2-TR).